We begin with the raw amino-acid sequence, 730 residues long: Catalase-peroxidase 1 (730 aa).

A cross-link (tryptophyl-tyrosyl-methioninium (Trp-Tyr) (with M-243)) is located at residues 92–217; sequence WHSAGTYRTT…LGAAVMGLIY (126 aa). H93 (proton acceptor) is an active-site residue. Residues 217-243 constitute a cross-link (tryptophyl-tyrosyl-methioninium (Tyr-Met) (with W-92)); sequence YVDPEGPNGNPDPLASAENIRESFGRM. Heme b is bound at residue H258.

This sequence belongs to the peroxidase family. Peroxidase/catalase subfamily. In terms of assembly, homodimer or homotetramer. Requires heme b as cofactor. In terms of processing, formation of the three residue Trp-Tyr-Met cross-link is important for the catalase, but not the peroxidase activity of the enzyme.

It carries out the reaction H2O2 + AH2 = A + 2 H2O. It catalyses the reaction 2 H2O2 = O2 + 2 H2O. Functionally, bifunctional enzyme with both catalase and broad-spectrum peroxidase activity. In Haloarcula marismortui (strain ATCC 43049 / DSM 3752 / JCM 8966 / VKM B-1809) (Halobacterium marismortui), this protein is Catalase-peroxidase 1.